The sequence spans 371 residues: Neutral protease 2 homolog MGYG_03465 (371 aa).

A signal peptide spans 1–19; it reads MQFVAVLAALGALVAPAAA. The propeptide occupies 20 to 188; that stretch reads YPHAPMNETL…SIHARALEKR (169 aa). 2 disulfides stabilise this stretch: Cys196/Cys267 and Cys274/Cys292. Residue His316 coordinates Zn(2+). Residue Glu317 is part of the active site. Residues His320 and Asp331 each contribute to the Zn(2+) site.

The protein belongs to the peptidase M35 family. Requires Zn(2+) as cofactor.

The protein localises to the secreted. The catalysed reaction is Preferential cleavage of bonds with hydrophobic residues in P1'. Also 3-Asn-|-Gln-4 and 8-Gly-|-Ser-9 bonds in insulin B chain.. Secreted metalloproteinase that allows assimilation of proteinaceous substrates. Shows high activities on basic nuclear substrates such as histone and protamine. May be involved in virulence. In Arthroderma gypseum (strain ATCC MYA-4604 / CBS 118893) (Microsporum gypseum), this protein is Neutral protease 2 homolog MGYG_03465.